Consider the following 153-residue polypeptide: Insulin-like growth factor 1 (153 aa).

The segment at 49–77 (GPETLCGAELVDALQFVCGPRGFYFNKPT) is b. 3 disulfide bridges follow: cysteine 54/cysteine 96, cysteine 66/cysteine 109, and cysteine 95/cysteine 100. The segment at 78–89 (GYGSSIRRAPQT) is c. The interval 90-110 (GIVDECCFRSCDLRRLEMYCA) is a. Residues 111 to 118 (PLKPTKSA) form a d region. Positions 119-153 (RSIRAQRHTDMPKTQKEVHLKNTSRGSAGNKTYRM) are cleaved as a propeptide — e peptide. Residues 119-153 (RSIRAQRHTDMPKTQKEVHLKNTSRGSAGNKTYRM) are disordered. Positions 125 to 138 (RHTDMPKTQKEVHL) are enriched in basic and acidic residues. Residues 139-153 (KNTSRGSAGNKTYRM) show a composition bias toward polar residues.

It belongs to the insulin family. In terms of assembly, forms a ternary complex with IGFR1 and ITGAV:ITGB3. Forms a ternary complex with IGFR1 and ITGA6:ITGB4. Forms a ternary complex with IGFBP3 and ALS.

It is found in the secreted. Its function is as follows. The insulin-like growth factors, isolated from plasma, are structurally and functionally related to insulin but have a much higher growth-promoting activity. May be a physiological regulator of [1-14C]-2-deoxy-D-glucose (2DG) transport and glycogen synthesis in osteoblasts. Stimulates glucose transport in bone-derived osteoblastic (PyMS) cells and is effective at much lower concentrations than insulin, not only regarding glycogen and DNA synthesis but also with regard to enhancing glucose uptake. May play a role in synapse maturation. Ca(2+)-dependent exocytosis of IGF1 is required for sensory perception of smell in the olfactory bulb. Acts as a ligand for IGF1R. Binds to the alpha subunit of IGF1R, leading to the activation of the intrinsic tyrosine kinase activity which autophosphorylates tyrosine residues in the beta subunit thus initiating a cascade of down-stream signaling events leading to activation of the PI3K-AKT/PKB and the Ras-MAPK pathways. Binds to integrins ITGAV:ITGB3 and ITGA6:ITGB4. Its binding to integrins and subsequent ternary complex formation with integrins and IGFR1 are essential for IGF1 signaling. Induces the phosphorylation and activation of IGFR1, MAPK3/ERK1, MAPK1/ERK2 and AKT1. As part of the MAPK/ERK signaling pathway, acts as a negative regulator of apoptosis in cardiomyocytes via promotion of STUB1/CHIP-mediated ubiquitination and degradation of ICER-type isoforms of CREM. The sequence is that of Insulin-like growth factor 1 from Rattus norvegicus (Rat).